A 159-amino-acid chain; its full sequence is Large ribosomal subunit protein eL29 (159 aa).

The span at 1 to 26 (MAKSKNHTTHNQSRKWHRNGIKKPRS) shows a compositional bias: basic residues. The disordered stretch occupies residues 1-32 (MAKSKNHTTHNQSRKWHRNGIKKPRSQRYESL). K5 carries the N6-methyllysine modification. A Phosphoserine modification is found at S31. At K33 the chain carries N6-acetyllysine. The span at 117 to 127 (RLCRPKAKAKA) shows a compositional bias: basic residues. A disordered region spans residues 117 to 159 (RLCRPKAKAKAKAKDQTKAQAAAPASVPAQAPKRTQAPTKASE). The span at 134 to 149 (KAQAAAPASVPAQAPK) shows a compositional bias: low complexity. S142 is subject to Phosphoserine.

This sequence belongs to the eukaryotic ribosomal protein eL29 family. Component of the large ribosomal subunit.

It localises to the cytoplasm. Component of the large ribosomal subunit. The ribosome is a large ribonucleoprotein complex responsible for the synthesis of proteins in the cell. The polypeptide is Large ribosomal subunit protein eL29 (RPL29) (Homo sapiens (Human)).